The chain runs to 273 residues: Nickel permease LarQ (273 aa).

5 helical membrane-spanning segments follow: residues 64-84 (LIQLLLLVILIALSNNLILLW), 117-137 (MLFVLPSYWLAGPTTLLFFGL), 159-179 (LAGLKALHCPDLLIMTLAIAI), 210-230 (LIGALFGNLYLKSYTYALELY), and 251-271 (HWRDYLALSPAIIVWILFIFW).

Belongs to the CbiQ family. May form an energy-coupling factor (ECF) transporter complex composed of an ATP-binding protein (A component, LarO), a transmembrane protein (T component, LarQ) and a fused possible substrate-capture protein (S component, LarMN) of unknown stoichiometry.

The protein resides in the cell membrane. In terms of biological role, probable transmembrane component of the energy-coupling factor (ECF) transporter complex LarMNQO involved in nickel import. This is Nickel permease LarQ from Lactiplantibacillus plantarum (strain ATCC BAA-793 / NCIMB 8826 / WCFS1) (Lactobacillus plantarum).